We begin with the raw amino-acid sequence, 331 residues long: Mitochondrial carrier protein CoAc1 (331 aa).

The next 6 helical transmembrane spans lie at 16-36, 79-99, 123-143, 193-213, 231-251, and 292-312; these read LVDTLPVLAKTLIAGGAAGAI, FYKGNGASVIRIIPYAALHYM, LVAGSAAGGTAVLCTYPLDLA, GIGPTLIGILPYAGLKFYIYE, LPCGALAGLFGQTITYPLDVV, and FAGLSINYIKIVPSVAIGFTV. Solcar repeat units follow at residues 21–107, 117–218, and 225–319; these read PVLA…YRDW, SGPI…LKRH, and NSVR…MKSW.

This sequence belongs to the mitochondrial carrier (TC 2.A.29) family. As to expression, expressed throughout the plant.

Its subcellular location is the mitochondrion inner membrane. In terms of biological role, required for the accumulation of coenzyme A in the mitochondrial matrix. The polypeptide is Mitochondrial carrier protein CoAc1 (Arabidopsis thaliana (Mouse-ear cress)).